Here is a 129-residue protein sequence, read N- to C-terminus: Glycine cleavage system H protein (129 aa).

Residues 24 to 106 (HAVVGITDFA…YDGGWLFKLA (83 aa)) form the Lipoyl-binding domain. The residue at position 65 (lysine 65) is an N6-lipoyllysine.

It belongs to the GcvH family. In terms of assembly, the glycine cleavage system is composed of four proteins: P, T, L and H. (R)-lipoate is required as a cofactor.

In terms of biological role, the glycine cleavage system catalyzes the degradation of glycine. The H protein shuttles the methylamine group of glycine from the P protein to the T protein. The chain is Glycine cleavage system H protein from Hydrogenovibrio crunogenus (strain DSM 25203 / XCL-2) (Thiomicrospira crunogena).